The chain runs to 193 residues: MTEYLLLFVGTVLVNNFVLVKFLGLCPFLGVSKKLESAIGMGMATTFVMTLASVSAWVINTFILVPLDLVYLRTLSFILVIAVVVQFTEMVVRKTSPALYRLLGIFLPLITTNCAVLGVALLNVNLGYNFLQSAVYGFSAAAGFSLVMVLFAAIRERLAVADVPAPFRGSSIALITAGLMSLAFMGFTGLVKF.

Transmembrane regions (helical) follow at residues 5-25 (LLLF…FLGL), 47-67 (FVMT…LVPL), 72-92 (LRTL…EMVV), 102-122 (LLGI…VALL), 134-154 (AVYG…FAAI), and 171-191 (SIAL…TGLV).

It belongs to the NqrDE/RnfAE family. The complex is composed of six subunits: RnfA, RnfB, RnfC, RnfD, RnfE and RnfG.

It is found in the cell inner membrane. In terms of biological role, part of a membrane-bound complex that couples electron transfer with translocation of ions across the membrane. This is Ion-translocating oxidoreductase complex subunit A from Serratia proteamaculans (strain 568).